Reading from the N-terminus, the 326-residue chain is uncharacterized protein (326 aa).

Residues 15–76 (VRIEKFCLKL…IEPYLHNHSE (62 aa)) enclose the S4 RNA-binding domain. The active site involves D147.

It belongs to the pseudouridine synthase RluA family.

It catalyses the reaction a uridine in RNA = a pseudouridine in RNA. This is an uncharacterized protein from Mycoplasma pneumoniae (strain ATCC 29342 / M129 / Subtype 1) (Mycoplasmoides pneumoniae).